Here is a 511-residue protein sequence, read N- to C-terminus: 2,3-bisphosphoglycerate-independent phosphoglycerate mutase (511 aa).

Asp18 and Ser68 together coordinate Mn(2+). The active-site Phosphoserine intermediate is the Ser68. Residues His129, 159-160, Arg191, Lys197, 261-264, and Lys329 each bind substrate; these read RD and RSDR. Residues Asp396, His400, Asp437, His438, and His459 each contribute to the Mn(2+) site. The interval 442–464 is disordered; the sequence is ERMTKQAPDGSVRPYGGHTTNPV.

This sequence belongs to the BPG-independent phosphoglycerate mutase family. As to quaternary structure, monomer. The cofactor is Mn(2+).

The catalysed reaction is (2R)-2-phosphoglycerate = (2R)-3-phosphoglycerate. It functions in the pathway carbohydrate degradation; glycolysis; pyruvate from D-glyceraldehyde 3-phosphate: step 3/5. Its function is as follows. Catalyzes the interconversion of 2-phosphoglycerate and 3-phosphoglycerate. This Streptomyces coelicolor (strain ATCC BAA-471 / A3(2) / M145) protein is 2,3-bisphosphoglycerate-independent phosphoglycerate mutase.